Here is a 1488-residue protein sequence, read N- to C-terminus: Chromosome partition protein MukB (1488 aa).

34-41 (GGNGAGKS) lines the ATP pocket. 3 coiled-coil regions span residues 326–418 (LEAD…QYNQ), 444–472 (LDTF…QTAH), and 509–602 (RHLA…QRAP). Residues 666–783 (PGGAEDQRLN…SLPIFGRAAR (118 aa)) are flexible hinge. Coiled coils occupy residues 835 to 923 (EAEI…AKLE), 977 to 1116 (EMLS…AKAG), and 1209 to 1265 (VEAI…LQSV).

It belongs to the SMC family. MukB subfamily. Homodimerization via its hinge domain. Binds to DNA via its C-terminal region. Interacts, and probably forms a ternary complex, with MukE and MukF via its C-terminal region. The complex formation is stimulated by calcium or magnesium. Interacts with tubulin-related protein FtsZ.

The protein resides in the cytoplasm. The protein localises to the nucleoid. Plays a central role in chromosome condensation, segregation and cell cycle progression. Functions as a homodimer, which is essential for chromosome partition. Involved in negative DNA supercoiling in vivo, and by this means organize and compact chromosomes. May achieve or facilitate chromosome segregation by condensation DNA from both sides of a centrally located replisome during cell division. The chain is Chromosome partition protein MukB from Salmonella paratyphi B (strain ATCC BAA-1250 / SPB7).